Consider the following 168-residue polypeptide: Cilia- and flagella-associated protein HOATZ (168 aa).

The segment at 142–168 (PKDKVPKSKEVLSESGLRDQEEVKALE) is disordered.

It belongs to the HOATZ family. Specifically expressed in tissues with motile cilia and flagella, such as brain ependyma, lung, testis, and oviduct but not in whole brain, liver,kidney, spleen, and eyeball.

The protein resides in the cytoplasm. The protein localises to the cell projection. It is found in the cilium. Required for motile ciliogenesis and flagellar genesis by mediating the maturation of the glycolytic enzyme ENO4. In Mus musculus (Mouse), this protein is Cilia- and flagella-associated protein HOATZ.